The following is a 538-amino-acid chain: Furcatin hydrolase (538 aa).

The N-terminal 66 residues, 1–66 (MATITTLASS…NFNKDNWLAS (66 aa)), are a transit peptide targeting the chloroplast. The interval 18–37 (SFPGGSSRKPKKDNLSIKPP) is disordered. A beta-D-glucoside-binding positions include Q88, H192, and 237 to 238 (NE). E238 acts as the Proton donor in catalysis. C257 and C260 are oxidised to a cystine. Residues Y376, E447, W494, 501 to 502 (EW), and F510 contribute to the a beta-D-glucoside site. E447 serves as the catalytic Nucleophile.

The protein belongs to the glycosyl hydrolase 1 family. As to expression, expressed in young and mature leaves, but not in fruit and stem.

It localises to the plastid. The protein localises to the chloroplast. It carries out the reaction 7-[beta-D-apiofuranosyl-(1-&gt;6)-beta-D-glucopyranosyloxy]isoflavonoid + H2O = a 7-hydroxyisoflavonoid + beta-D-apiofuranosyl-(1-&gt;6)-D-glucose.. In terms of biological role, disaccharide-specific acuminosidase, hydrolyzes the beta-glycosidic bond between p-allylphenol and acuminose with retention of anomeric configuration. Has highest activity towards furcatin, and lower activity towards beta-primeverosides and beta-vicianoside. Has very low activity towards beta-gentobiosides. This is Furcatin hydrolase from Viburnum furcatum (Scarlet leaved viburnum).